Consider the following 557-residue polypeptide: Ubiquitin C-terminal hydrolase 22 (557 aa).

The segment at 36–130 adopts a UBP-type; degenerate zinc-finger fold; the sequence is FRCFNDARIK…VSKQLFGLGM (95 aa). Residues Cys56, Cys59, Cys69, Cys72, Cys77, His80, His84, and His91 each coordinate Zn(2+). Positions 177–531 constitute a USP domain; the sequence is RGLNNLGSTC…ECYMLFYAQE (355 aa). Cys186 (nucleophile) is an active-site residue. His491 functions as the Proton acceptor in the catalytic mechanism.

This sequence belongs to the peptidase C19 family. In terms of assembly, component of a deubiquitination module (DUB module) formed by ENY2, SGF11, and UBP22 in Arabidopsis. Interacts directly with SGF11, but not with ENY2.

Its subcellular location is the nucleus. The protein localises to the nucleoplasm. It carries out the reaction Thiol-dependent hydrolysis of ester, thioester, amide, peptide and isopeptide bonds formed by the C-terminal Gly of ubiquitin (a 76-residue protein attached to proteins as an intracellular targeting signal).. Its function is as follows. Component of a deubiquitination module (DUB module) that specifically deubiquinates monoubiquinated histone H2B (H2Bub). Does not seem to be a component of the TREX-2 complex. Seems to act independently of the SAGA multiprotein complex. The DUB module is responsible for the major H2Bub deubiquitinase activity in Arabidopsis. In Arabidopsis thaliana (Mouse-ear cress), this protein is Ubiquitin C-terminal hydrolase 22.